A 26-amino-acid chain; its full sequence is Neprilysin (26 aa).

It belongs to the peptidase M13 family. Zn(2+) serves as cofactor.

The protein localises to the cell membrane. It catalyses the reaction Preferential cleavage of polypeptides between hydrophobic residues, particularly with Phe or Tyr at P1'.. The catalysed reaction is substance P + H2O = substance P(1-9) + L-Leu-L-Met-NH2. The enzyme catalyses substance P + H2O = substance P(1-7) + L-Phe-Gly-L-Leu-L-Met-NH2. It carries out the reaction neurotensin + H2O = neurotensin(1-11) + L-isoleucyl-L-leucine. It catalyses the reaction neurotensin + H2O = neurotensin(1-10) + L-tyrosyl-L-isoleucyl-L-leucine. Functionally, thermolysin-like specificity, but is almost confined on acting on polypeptides of up to 30 amino acids. Biologically important in the destruction of opioid peptides such as Met- and Leu-enkephalins by cleavage of a Gly-Phe bond. Catalyzes cleavage of bradykinin, substance P and neurotensin peptides. Able to cleave angiotensin-1, angiotensin-2 and angiotensin 1-9. Involved in the degradation of atrial natriuretic factor (ANF) and brain natriuretic factor (BNP(1-32)). Displays UV-inducible elastase activity toward skin preelastic and elastic fibers. The sequence is that of Neprilysin (MME) from Sus scrofa (Pig).